We begin with the raw amino-acid sequence, 201 residues long: ATP-dependent Clp protease proteolytic subunit (201 aa).

Ser98 functions as the Nucleophile in the catalytic mechanism. His123 is a catalytic residue.

The protein belongs to the peptidase S14 family. In terms of assembly, fourteen ClpP subunits assemble into 2 heptameric rings which stack back to back to give a disk-like structure with a central cavity, resembling the structure of eukaryotic proteasomes.

The protein localises to the cytoplasm. It carries out the reaction Hydrolysis of proteins to small peptides in the presence of ATP and magnesium. alpha-casein is the usual test substrate. In the absence of ATP, only oligopeptides shorter than five residues are hydrolyzed (such as succinyl-Leu-Tyr-|-NHMec, and Leu-Tyr-Leu-|-Tyr-Trp, in which cleavage of the -Tyr-|-Leu- and -Tyr-|-Trp bonds also occurs).. Its function is as follows. Cleaves peptides in various proteins in a process that requires ATP hydrolysis. Has a chymotrypsin-like activity. Plays a major role in the degradation of misfolded proteins. The protein is ATP-dependent Clp protease proteolytic subunit of Rickettsia akari (strain Hartford).